A 617-amino-acid chain; its full sequence is Elongation factor 4 (617 aa).

Residues 17–198 form the tr-type G domain; it reads AIIRNFCIIA…KIVRDLPAPV (182 aa). GTP contacts are provided by residues 29 to 34 and 145 to 148; these read DHGKST and NKID.

Belongs to the TRAFAC class translation factor GTPase superfamily. Classic translation factor GTPase family. LepA subfamily.

It is found in the cell membrane. It catalyses the reaction GTP + H2O = GDP + phosphate + H(+). Functionally, required for accurate and efficient protein synthesis under certain stress conditions. May act as a fidelity factor of the translation reaction, by catalyzing a one-codon backward translocation of tRNAs on improperly translocated ribosomes. Back-translocation proceeds from a post-translocation (POST) complex to a pre-translocation (PRE) complex, thus giving elongation factor G a second chance to translocate the tRNAs correctly. Binds to ribosomes in a GTP-dependent manner. The chain is Elongation factor 4 from Arthrobacter sp. (strain FB24).